The chain runs to 1107 residues: Membrane-associated guanylate kinase, WW and PDZ domain-containing protein 3 (1107 aa).

Positions 17 to 102 (ECGLSGVGGD…PIRLKTVKPG (86 aa)) constitute a PDZ 1 domain. A Guanylate kinase-like domain is found at 110–284 (RHYLSLQFQK…SMDFRNYLTR (175 aa)). 117–124 (FQKGSIDH) contacts ATP. Positions 210–277 (FDTETQRKRT…SYNQTNSSMD (68 aa)) are disordered. The segment covering 220–231 (TSVSKMQRTDSS) has biased composition (polar residues). Acidic residues predominate over residues 232–241 (LPEEEDEEER). A compositionally biased stretch (basic and acidic residues) spans 251–261 (TDHRDRQEPSE). Residues 267–277 (PSYNQTNSSMD) are compositionally biased toward polar residues. WW domains lie at 289–322 (EPLPKNWEMAYTEAGMIYFIDHNTKTTTWLDPRL) and 335–368 (GELPYGWEKIEDPQYGTYYVDHINQKTQFDNPVL). A disordered region spans residues 374-398 (KQLNPAPSEGTVHQEPENSQFTRDP). 4 PDZ domains span residues 407–489 (HTSL…TLCR), 577–653 (TIPL…LILR), 727–809 (DVFL…TVRR), and 853–940 (DVIL…IAEE). Residues 941–975 (EHRGPPSGSNSARQSPAPQHRPMGQTQPTYGTLDR) are disordered. A compositionally biased stretch (polar residues) spans 947–957 (SGSNSARQSPA). Residues 1003-1085 (PVELERGPRG…KVLLLLRPGT (83 aa)) enclose the PDZ 6 domain.

It belongs to the MAGUK family.

The protein resides in the cell membrane. The protein localises to the cell junction. Its subcellular location is the tight junction. Functionally, acts as a scaffolding protein at cell-cell junctions, thereby regulating various cellular and signaling processes. This Xenopus tropicalis (Western clawed frog) protein is Membrane-associated guanylate kinase, WW and PDZ domain-containing protein 3 (magi3).